Here is a 505-residue protein sequence, read N- to C-terminus: Trans-cinnamate 4-monooxygenase (505 aa).

The helical transmembrane segment at 3–23 threads the bilayer; sequence LLLLEKTLLGLFAAIIVASIV. (E)-cinnamate-binding positions include 213–218 and Ala-306; that span reads RSRLAQ. A heme-binding site is contributed by Cys-447.

This sequence belongs to the cytochrome P450 family. The cofactor is heme.

It localises to the membrane. The enzyme catalyses (E)-cinnamate + reduced [NADPH--hemoprotein reductase] + O2 = (E)-4-coumarate + oxidized [NADPH--hemoprotein reductase] + H2O + H(+). Its pathway is phenylpropanoid metabolism; trans-4-coumarate biosynthesis; trans-4-coumarate from trans-cinnamate: step 1/1. Its function is as follows. Catalyzes the first oxidative step of the phenylpropanoid pathway in higher plants by transforming trans-cinnamate into p-coumarate. The compounds formed by this pathway are essential components for lignification, pollination, and defense against ultraviolet light, predators and pathogens. This Catharanthus roseus (Madagascar periwinkle) protein is Trans-cinnamate 4-monooxygenase (CYP73A4).